We begin with the raw amino-acid sequence, 524 residues long: Secologanin synthase 1 (524 aa).

The Lumenal segment spans residues Met1–Ala11. A helical transmembrane segment spans residues Ile12–Trp32. Topologically, residues Phe33–Ser524 are cytoplasmic. Cys470 is a heme binding site.

Belongs to the cytochrome P450 family. Heme serves as cofactor. In terms of tissue distribution, upper and lower leaf epidermis.

The protein resides in the endoplasmic reticulum membrane. The catalysed reaction is loganin + reduced [NADPH--hemoprotein reductase] + O2 = secologanin + oxidized [NADPH--hemoprotein reductase] + 2 H2O + H(+). The enzyme catalyses secologanin + reduced [NADPH--hemoprotein reductase] + O2 = secoxyloganin + oxidized [NADPH--hemoprotein reductase] + H2O + 2 H(+). The protein operates within alkaloid biosynthesis; secologanin biosynthesis. Functionally, component of the seco-iridoid and derivatives monoterpenoid indole alkaloids (MIAs, e.g. secologanin) biosynthesis pathway. Catalyzes the conversion of loganin into secologanin. Catalyzes the conversion of secologanin into secoxyloganin. This Catharanthus roseus (Madagascar periwinkle) protein is Secologanin synthase 1.